Consider the following 287-residue polypeptide: L-ascorbate peroxidase 3 (287 aa).

Position 2 is an N-acetylalanine (A2). The active-site Proton acceptor is H40. The interval 46–66 (DAQSKTGGPNGSIRNEEEHTH) is disordered. A heme b-binding site is contributed by H160. T161, T177, and D184 together coordinate K(+). The helical transmembrane segment at 259–279 (ILAQSAFGVAVAAAVVAFGYF) threads the bilayer. The AKR2A-binding sequence (ABS) required for peroxisome membrane targeting signature appears at 281 to 287 (EIRKRMK).

This sequence belongs to the peroxidase family. Ascorbate peroxidase subfamily. In terms of assembly, interacts via its C-terminal region with AKR2A and AKR2B. It depends on heme b as a cofactor.

The protein localises to the peroxisome membrane. It localises to the glyoxysome membrane. The catalysed reaction is L-ascorbate + H2O2 = L-dehydroascorbate + 2 H2O. Functionally, plays a key role in hydrogen peroxide removal. This chain is L-ascorbate peroxidase 3 (APX3), found in Arabidopsis thaliana (Mouse-ear cress).